A 445-amino-acid polypeptide reads, in one-letter code: Tubulin beta-2 chain (445 aa).

Gln-12, Glu-73, Ser-142, Gly-146, Thr-147, Gly-148, Asn-208, and Asn-230 together coordinate GTP. Mg(2+) is bound at residue Glu-73.

Belongs to the tubulin family. As to quaternary structure, dimer of alpha and beta chains. A typical microtubule is a hollow water-filled tube with an outer diameter of 25 nm and an inner diameter of 15 nM. Alpha-beta heterodimers associate head-to-tail to form protofilaments running lengthwise along the microtubule wall with the beta-tubulin subunit facing the microtubule plus end conferring a structural polarity. Microtubules usually have 13 protofilaments but different protofilament numbers can be found in some organisms and specialized cells. It depends on Mg(2+) as a cofactor.

It is found in the cytoplasm. Its subcellular location is the cytoskeleton. Functionally, tubulin is the major constituent of microtubules, a cylinder consisting of laterally associated linear protofilaments composed of alpha- and beta-tubulin heterodimers. Microtubules grow by the addition of GTP-tubulin dimers to the microtubule end, where a stabilizing cap forms. Below the cap, tubulin dimers are in GDP-bound state, owing to GTPase activity of alpha-tubulin. This chain is Tubulin beta-2 chain (TUBB2), found in Suillus bovinus (Jersey cow bolete).